We begin with the raw amino-acid sequence, 61 residues long: Photosystem II reaction center protein K (61 aa).

A propeptide spanning residues Met-1–Gly-24 is cleaved from the precursor. Residues Ile-36–Ala-56 form a helical membrane-spanning segment.

It belongs to the PsbK family. As to quaternary structure, PSII is composed of 1 copy each of membrane proteins PsbA, PsbB, PsbC, PsbD, PsbE, PsbF, PsbH, PsbI, PsbJ, PsbK, PsbL, PsbM, PsbT, PsbX, PsbY, PsbZ, Psb30/Ycf12, at least 3 peripheral proteins of the oxygen-evolving complex and a large number of cofactors. It forms dimeric complexes.

Its subcellular location is the plastid. It localises to the chloroplast thylakoid membrane. Functionally, one of the components of the core complex of photosystem II (PSII). PSII is a light-driven water:plastoquinone oxidoreductase that uses light energy to abstract electrons from H(2)O, generating O(2) and a proton gradient subsequently used for ATP formation. It consists of a core antenna complex that captures photons, and an electron transfer chain that converts photonic excitation into a charge separation. The polypeptide is Photosystem II reaction center protein K (Coffea arabica (Arabian coffee)).